The chain runs to 372 residues: Sulfate/thiosulfate import ATP-binding protein CysA (372 aa).

In terms of domain architecture, ABC transporter spans 3-237 (IQVQHVTKRF…PATPFVYGFL (235 aa)). 35-42 (GPSGCGKT) is an ATP binding site.

It belongs to the ABC transporter superfamily. Sulfate/tungstate importer (TC 3.A.1.6) family. The complex is composed of two ATP-binding proteins (CysA), two transmembrane proteins (CysT and CysW) and a solute-binding protein (CysP).

It is found in the cell inner membrane. It catalyses the reaction sulfate(out) + ATP + H2O = sulfate(in) + ADP + phosphate + H(+). It carries out the reaction thiosulfate(out) + ATP + H2O = thiosulfate(in) + ADP + phosphate + H(+). In terms of biological role, part of the ABC transporter complex CysAWTP involved in sulfate/thiosulfate import. Responsible for energy coupling to the transport system. This is Sulfate/thiosulfate import ATP-binding protein CysA from Ralstonia nicotianae (strain ATCC BAA-1114 / GMI1000) (Ralstonia solanacearum).